A 676-amino-acid chain; its full sequence is MTQVAKKILVTCALPYANGSIHLGHMLEHVQADIWVRYQRMRGNQVHFICADDAHGTPIMLKAQQMGIAPEQMIAAMSQEHQQDFAGFNISYDNYHSTHSEENRELSGLIYGRLKENGFIKNRTISQLYDPEKGMFLPDRFVKGTCPKCKAADQYGDNCEVCGATYSTTELIEPKSAVSGATPEMRESEHFFFDLPAFSDMLQAWTRSGALQEQVANKMQEWFDSGLQQWDITRDAPYFGFEVPDAPGKYFYVWLDAPIGYMGSFKNLCDKRGDLNFDDFWKKDSDADLYHFIGKDIVYFHSLFWPAMLEGSGFRKPTNLFVHGYVTVNGAKMSKSRGTFIKAGTYLQHLDADCLRYYYAAKLSSRIDDIDLNLEDFVQRVNADIVNKVVNLASRNAGFISKRFDGKLADKLADAELYKTFTDAGASIAEAYSSRESGRAIREIMALADIANRYVDEQAPWVVAKVEGRDADLQAICSMGINLFRVLMTYLKPVLPALTQRTEAFLNTELSWDAITTPLLSHQVNPFKALFNRIDLDKVSAMVDASKEDMVTAQNVVSGPLADNPVQDTINFDDFAKVDMRIALIKQAELVDGSDKLLRLTLDLGGETRQVFSGIREAYPDPAKLEGRLTVMVANLAPRKMRFGISEGMVMAAGPGGKDIFLLSPDSGAQPGMQVK.

The 'HIGH' region motif lies at 15–25 (PYANGSIHLGH). Zn(2+) is bound by residues Cys146, Cys149, Cys159, and Cys162. A 'KMSKS' region motif is present at residues 332 to 336 (KMSKS). Residue Lys335 coordinates ATP. In terms of domain architecture, tRNA-binding spans 574–676 (DFAKVDMRIA…SGAQPGMQVK (103 aa)).

The protein belongs to the class-I aminoacyl-tRNA synthetase family. MetG type 1 subfamily. Homodimer. Requires Zn(2+) as cofactor.

The protein resides in the cytoplasm. The enzyme catalyses tRNA(Met) + L-methionine + ATP = L-methionyl-tRNA(Met) + AMP + diphosphate. In terms of biological role, is required not only for elongation of protein synthesis but also for the initiation of all mRNA translation through initiator tRNA(fMet) aminoacylation. In Pectobacterium atrosepticum (strain SCRI 1043 / ATCC BAA-672) (Erwinia carotovora subsp. atroseptica), this protein is Methionine--tRNA ligase.